Consider the following 102-residue polypeptide: Putative septation protein SpoVG 1 (102 aa).

It belongs to the SpoVG family.

Functionally, could be involved in septation. This Listeria innocua serovar 6a (strain ATCC BAA-680 / CLIP 11262) protein is Putative septation protein SpoVG 1.